Here is a 697-residue protein sequence, read N- to C-terminus: MANKREFPLAKTRNIGIMAHIDAGKTTTTERILYYTGKIHKIGETHEGDSQMDWMDEEKERGITITSAATTAQWKDYRINIIDTPGHVDFTIEVERSLRVLDGAVTVLDAQAGVEPQTENVWRQAETYGVPRIVFVNKMDKIGADFDKSVKSLHERLNANAQAVQMPIGSADTFEGVIDLINMVADIYDEDKLGSKWDTVPVPDEYKEEAEKRRAALIEAVADVDDNIMEKYLGGEEISNDELKAAIRKATLNLEFFPVYAGSAFKNKGVQMMLDGVIDYLPSPLDVKPYVAHDPKTGDEVELMADDKKPFAALAFKIATDPFVGRLTFIRVYTGSLESGSYVLNASKNSRERVGRLLQMHANSRTEIPEVFSGDIAGAIGLKNTTTGDSLTDPDHPLILESLQVPDPVIQVSVEPKSKADRDKMDVALQKLTEEDPTFRAETNPETGQTLISGMGELHLDIMVERMRREFNVEAKIGEPQVAYRETFTKEAKAQGKFVRQSGGKGQYGDVWIDFTPNEEGKGYEFEDAIVGGVVPREFIPSVDQGLQEAMKNGVLAGYPLIDVKAKLYDGSYHEVDSSEAAFKVAASLALRNAASKAGAVILEPIMKVQVTTPEEYLGDVMGSITARRGTMEGMEDRAGAKIINSFVPLSEMFGYATTLRSSTQGRGTFTMVFDHYSPTPKSIQADIIKKRGGDAE.

The tr-type G domain occupies Ala-10–Leu-285. GTP is bound by residues Ala-19–Thr-26, Asp-83–His-87, and Asn-137–Asp-140.

This sequence belongs to the TRAFAC class translation factor GTPase superfamily. Classic translation factor GTPase family. EF-G/EF-2 subfamily.

The protein resides in the cytoplasm. Functionally, catalyzes the GTP-dependent ribosomal translocation step during translation elongation. During this step, the ribosome changes from the pre-translocational (PRE) to the post-translocational (POST) state as the newly formed A-site-bound peptidyl-tRNA and P-site-bound deacylated tRNA move to the P and E sites, respectively. Catalyzes the coordinated movement of the two tRNA molecules, the mRNA and conformational changes in the ribosome. This is Elongation factor G from Lactobacillus acidophilus (strain ATCC 700396 / NCK56 / N2 / NCFM).